Here is a 413-residue protein sequence, read N- to C-terminus: Replication factor C large subunit (413 aa).

54-61 is a binding site for ATP; it reads GPPGSGKT.

This sequence belongs to the activator 1 small subunits family. RfcL subfamily. As to quaternary structure, heteromultimer composed of small subunits (RfcS) and large subunits (RfcL).

Its function is as follows. Part of the RFC clamp loader complex which loads the PCNA sliding clamp onto DNA. The chain is Replication factor C large subunit from Thermofilum pendens (strain DSM 2475 / Hrk 5).